The following is a 318-amino-acid chain: Ribose-phosphate pyrophosphokinase 1 (318 aa).

96-101 is a binding site for ATP; that stretch reads RQDKKD. Mg(2+)-binding residues include Asp128, His130, Asp139, and Asp143. His130 serves as a coordination point for ATP. Residues 212–227 are binding of phosphoribosylpyrophosphate; it reads KDRVAILVDDMADTCG.

Belongs to the ribose-phosphate pyrophosphokinase family. As to quaternary structure, homodimer. The active form is probably a hexamer composed of 3 homodimers. The cofactor is Mg(2+).

The enzyme catalyses D-ribose 5-phosphate + ATP = 5-phospho-alpha-D-ribose 1-diphosphate + AMP + H(+). It participates in metabolic intermediate biosynthesis; 5-phospho-alpha-D-ribose 1-diphosphate biosynthesis; 5-phospho-alpha-D-ribose 1-diphosphate from D-ribose 5-phosphate (route I): step 1/1. Its activity is regulated as follows. Activated by magnesium and inorganic phosphate. Its function is as follows. Catalyzes the synthesis of phosphoribosylpyrophosphate (PRPP) that is essential for nucleotide synthesis. The protein is Ribose-phosphate pyrophosphokinase 1 (PRPS1) of Bos taurus (Bovine).